Consider the following 162-residue polypeptide: Phosphopantetheine adenylyltransferase (162 aa).

Position 9 (Ser-9) interacts with substrate. ATP is bound by residues 9–10 (SF) and His-17. Substrate-binding residues include Lys-41, Leu-77, and Lys-91. ATP-binding positions include 92–94 (GLR), Glu-102, and 126–132 (YAFLSSS).

The protein belongs to the bacterial CoaD family. As to quaternary structure, homohexamer. The cofactor is Mg(2+).

The protein resides in the cytoplasm. The enzyme catalyses (R)-4'-phosphopantetheine + ATP + H(+) = 3'-dephospho-CoA + diphosphate. It functions in the pathway cofactor biosynthesis; coenzyme A biosynthesis; CoA from (R)-pantothenate: step 4/5. Reversibly transfers an adenylyl group from ATP to 4'-phosphopantetheine, yielding dephospho-CoA (dPCoA) and pyrophosphate. This chain is Phosphopantetheine adenylyltransferase, found in Parafrankia sp. (strain EAN1pec).